The chain runs to 33 residues: Rhinophrynin-33 (33 aa).

Expressed by the skin glands.

The protein localises to the secreted. In terms of biological role, non-cytotoxic peptide with immunosuppressive and insulinotropic effects. Induces an increased production of the anti-inflammatory cytokine IL-10 and inhibits production of the pro-inflammatory cytokines TNF-alpha and IL-1beta, when incubated with mouse peritoneal cells. Does not display growth-inhibitory activity against the Gram-positive S.epidermidis and Gram-negative E.coli bacteria and against the opportunistic yeast pathogen C.parapsilosis (MIC&gt;128 uM). In addition, it lacks cytotoxic activity against mouse erythrocytes (LC(50)&gt;500 uM) and A549 human non-small cell lung adenocarcinoma cells (LC(50)&gt;100 uM). Moderately stimulates insulin release from rat clonal beta-cells and mouse pancreatic islets. Non-cytotoxic peptide with immunosuppressive but without insulinotropic effects. Inhibits production of the pro-inflammatory cytokines TNF-alpha, but has no effect on IL-10 and IL-1beta production, when incubated with mouse peritoneal cells. Has no activity of stimulation of insulin release. The polypeptide is Rhinophrynin-33 (Rhinophrynus dorsalis (Mexican burrowing toad)).